A 181-amino-acid chain; its full sequence is Inner membrane-spanning protein YciB (181 aa).

5 helical membrane-spanning segments follow: residues Leu3–Tyr23, Ser54–Ile74, Ile81–Ile101, Leu119–Tyr139, and Phe149–Leu169.

Belongs to the YciB family.

Its subcellular location is the cell inner membrane. Functionally, plays a role in cell envelope biogenesis, maintenance of cell envelope integrity and membrane homeostasis. The polypeptide is Inner membrane-spanning protein YciB (Legionella pneumophila subsp. pneumophila (strain Philadelphia 1 / ATCC 33152 / DSM 7513)).